The primary structure comprises 299 residues: dTDP-4-dehydrorhamnose reductase (299 aa).

Residues 10–12 (GQV), aspartate 30, 39–40 (DF), and 63–65 (AHT) each bind NADH. 11 to 12 (QV) serves as a coordination point for NADPH. Residues 39–40 (DF), 63–65 (AHT), and tyrosine 102 contribute to the NADPH site. 104–105 (TD) lines the dTDP-beta-L-rhamnose pocket. NADH-binding residues include tyrosine 128 and lysine 132. Residues tyrosine 128 and lysine 132 each contribute to the NADPH site. Catalysis depends on tyrosine 128, which acts as the Proton donor/acceptor. Position 153 (tryptophan 153) interacts with dTDP-beta-L-rhamnose.

It belongs to the dTDP-4-dehydrorhamnose reductase family. Homodimer. Requires Mg(2+) as cofactor.

It carries out the reaction dTDP-beta-L-rhamnose + NADP(+) = dTDP-4-dehydro-beta-L-rhamnose + NADPH + H(+). It participates in carbohydrate biosynthesis; dTDP-L-rhamnose biosynthesis. It functions in the pathway bacterial outer membrane biogenesis; LPS O-antigen biosynthesis. In terms of biological role, involved in the biosynthesis of the dTDP-L-rhamnose which is an important component of lipopolysaccharide (LPS). Catalyzes the reduction of dTDP-6-deoxy-L-lyxo-4-hexulose to yield dTDP-L-rhamnose. RmlD uses NADH and NADPH nearly equally well. This chain is dTDP-4-dehydrorhamnose reductase, found in Shigella flexneri.